Reading from the N-terminus, the 430-residue chain is Aspartate aminotransferase, mitochondrial (430 aa).

A mitochondrion-targeting transit peptide spans 1–29; that stretch reads MALLHSGRFLSGVAAAFHPGLAAAASARA. A Phosphothreonine modification is found at Thr-48. Residue Lys-59 is modified to N6-acetyllysine. Gly-65 contributes to the substrate binding site. Lys-73 is subject to N6-acetyllysine; alternate. An N6-succinyllysine; alternate modification is found at Lys-73. Lys-82 is modified (N6-acetyllysine). An N6-acetyllysine; alternate modification is found at Lys-90. Lys-90 is modified (N6-succinyllysine; alternate). A 3'-nitrotyrosine; alternate modification is found at Tyr-96. The residue at position 96 (Tyr-96) is a Phosphotyrosine; alternate. N6-acetyllysine; alternate occurs at positions 107 and 122. Lys-107 and Lys-122 each carry N6-succinyllysine; alternate. Position 143 is a phosphoserine (Ser-143). Lys-159 carries the N6-acetyllysine; alternate modification. Lys-159 is modified (N6-succinyllysine; alternate). Trp-162 contributes to the substrate binding site. An N6-acetyllysine; alternate modification is found at Lys-185. N6-succinyllysine; alternate is present on Lys-185. Residue Asn-215 coordinates substrate. Lys-227 carries the post-translational modification N6-succinyllysine. The residue at position 234 (Lys-234) is an N6-acetyllysine. An N6-acetyllysine; alternate mark is found at Lys-279 and Lys-296. Lys-279 carries the post-translational modification N6-(pyridoxal phosphate)lysine; alternate. The residue at position 296 (Lys-296) is an N6-succinyllysine; alternate. At Lys-302 the chain carries N6-acetyllysine. Lys-309 is modified (N6-acetyllysine; alternate). An N6-succinyllysine; alternate modification is found at Lys-309. Residue Arg-313 is modified to Asymmetric dimethylarginine. Residue Lys-338 is modified to N6-acetyllysine; alternate. Lys-338 bears the N6-succinyllysine; alternate mark. An N6-acetyllysine modification is found at Lys-345. Lys-363 bears the N6-acetyllysine; alternate mark. An N6-succinyllysine; alternate modification is found at Lys-363. 2 positions are modified to N6-acetyllysine: Lys-364 and Lys-387. Residues Lys-396 and Lys-404 each carry the N6-acetyllysine; alternate modification. N6-succinyllysine; alternate is present on residues Lys-396 and Lys-404. Arg-407 lines the substrate pocket.

This sequence belongs to the class-I pyridoxal-phosphate-dependent aminotransferase family. As to quaternary structure, homodimer. Pyridoxal 5'-phosphate serves as cofactor.

The protein localises to the mitochondrion matrix. Its subcellular location is the cell membrane. The catalysed reaction is L-aspartate + 2-oxoglutarate = oxaloacetate + L-glutamate. It carries out the reaction L-kynurenine + 2-oxoglutarate = 4-(2-aminophenyl)-2,4-dioxobutanoate + L-glutamate. Functionally, catalyzes the irreversible transamination of the L-tryptophan metabolite L-kynurenine to form kynurenic acid (KA). As a member of the malate-aspartate shuttle, it has a key role in the intracellular NAD(H) redox balance. Is important for metabolite exchange between mitochondria and cytosol, and for amino acid metabolism. Facilitates cellular uptake of long-chain free fatty acids. The sequence is that of Aspartate aminotransferase, mitochondrial (GOT2) from Bos taurus (Bovine).